The sequence spans 1019 residues: Photoactivated adenylate cyclase subunit alpha-like protein 1224-5/1F (1019 aa).

Positions 55-148 (LRRLMYLSAS…GRMYGWWHLK (94 aa)) constitute a BLUF 1 domain. The Guanylate cyclase 1 domain maps to 204–332 (VVTVIYLVEF…DWINSASRIT (129 aa)). In terms of domain architecture, BLUF 2 spans 467 to 559 (LITLTYISQA…GVYGSPLDMT (93 aa)). Positions 615–744 (VMLATAISSF…EVRARVLEVE (130 aa)) constitute a Guanylate cyclase 2 domain. The disordered stretch occupies residues 825–863 (NISCRGGNPPAGGIPTSPKVRPPGRTNSVSSYTPDPKQA).

This sequence belongs to the adenylyl cyclase class-4/guanylyl cyclase family. As to quaternary structure, heterotetramer of two alpha and two beta subunits.

It localises to the cell projection. The protein localises to the cilium. Its subcellular location is the flagellum. The protein is Photoactivated adenylate cyclase subunit alpha-like protein 1224-5/1F of Euglena gracilis.